The chain runs to 86 residues: Small ribosomal subunit protein bS20 (86 aa).

Residues 1–26 (MANIKSAKKRALQSEKSRKHNASRRT) are disordered.

It belongs to the bacterial ribosomal protein bS20 family.

In terms of biological role, binds directly to 16S ribosomal RNA. This is Small ribosomal subunit protein bS20 from Psychromonas ingrahamii (strain DSM 17664 / CCUG 51855 / 37).